Here is a 2235-residue protein sequence, read N- to C-terminus: Bridge-like lipid transfer protein family member 2 (2235 aa).

The signal sequence occupies residues 1 to 31 (MPLFFSALLVLLLVALSALFLGRWLVVRLAT). Residues 29–108 (LATKWCQRKL…LQKVSDLSAP (80 aa)) form a transmembrane domain region. Ser-563 carries the phosphoserine modification. Residue Asn-730 is glycosylated (N-linked (GlcNAc...) asparagine). A disordered region spans residues 1495-1529 (PQMPAKKPKRGVPTSASAPPRVNTPSFSGQPDKGS). The stretch at 1813–1885 (SILHLQEAVR…LNILIRCFKD (73 aa)) forms a coiled coil. Phosphoserine is present on residues Ser-1846, Ser-2090, and Ser-2094. A disordered region spans residues 2074 to 2099 (GKGVAQGLTRSSGVRRSFRKSPEHPV).

This sequence belongs to the SABRE family. As to expression, expressed in pancreas, placenta and up-regulated in breast carcinoma epithelial cells, ductal in situ carcinoma (DCIS), invasive breast carcinoma (IBC) and metastatic breast carcinoma cells (MET).

The protein resides in the cell membrane. It localises to the endoplasmic reticulum membrane. The protein localises to the mitochondrion membrane. In terms of biological role, tube-forming lipid transport protein which binds to phosphatidylinositols and affects phosphatidylinositol-4,5-bisphosphate (PtdIns-4,5-P2) distribution. In Homo sapiens (Human), this protein is Bridge-like lipid transfer protein family member 2.